The primary structure comprises 1187 residues: Disease resistance protein TAO1 (1187 aa).

A TIR domain is found at 38-202 (WLHPVFLSFR…KISKDVSDVL (165 aa)). Glutamate 113 is an active-site residue. One can recognise an NB-ARC domain in the interval 217–478 (EAHTTEITSL…FFRRERIETL (262 aa)). LRR repeat units follow at residues 498–522 (DKSL…GLDI), 611–633 (SRKL…KFNP), 635–658 (FLVK…PIRN), 660–679 (KWMD…FSTA), 680–703 (TNLQ…IGNA), 704–727 (TNLL…IGNL), 728–750 (TNLK…SFGN), 752–775 (TSLK…IGNI), 799–823 (NTNL…MLNL), 824–849 (TRLE…VINL), 870–894 (ATNL…IWNI), 895–918 (TNLQ…VENA), 920–942 (NLQS…IWRI), and 953–974 (CSSL…LILD).

The catalysed reaction is NAD(+) + H2O = ADP-D-ribose + nicotinamide + H(+). TIR-NB-LRR receptor-like protein that contributes to disease resistance induced by the Pseudomonas syringae type III effector AvrB. Acts additively with RPM1 to generate a full disease resistance response to P.syringae expressing this type III effector. The sequence is that of Disease resistance protein TAO1 from Arabidopsis thaliana (Mouse-ear cress).